A 509-amino-acid polypeptide reads, in one-letter code: uncharacterized protein (509 aa).

The protein localises to the virion. This is an uncharacterized protein from Acanthamoeba polyphaga mimivirus (APMV).